Reading from the N-terminus, the 244-residue chain is tRNA (guanine-N(1)-)-methyltransferase (244 aa).

S-adenosyl-L-methionine-binding positions include Gly113 and 133–138; that span reads IGDYVL.

This sequence belongs to the RNA methyltransferase TrmD family. As to quaternary structure, homodimer.

The protein localises to the cytoplasm. The enzyme catalyses guanosine(37) in tRNA + S-adenosyl-L-methionine = N(1)-methylguanosine(37) in tRNA + S-adenosyl-L-homocysteine + H(+). In terms of biological role, specifically methylates guanosine-37 in various tRNAs. This Bacillus cereus (strain G9842) protein is tRNA (guanine-N(1)-)-methyltransferase.